We begin with the raw amino-acid sequence, 282 residues long: Putative hydrolase Bcenmc03_4750 (282 aa).

Mg(2+) is bound by residues Glu-124, Glu-126, and Asp-155.

Belongs to the FAH family. The cofactor is Mg(2+).

The polypeptide is Putative hydrolase Bcenmc03_4750 (Burkholderia orbicola (strain MC0-3)).